Here is a 632-residue protein sequence, read N- to C-terminus: Probable potassium transport system protein Kup 2 (632 aa).

The next 12 membrane-spanning stretches (helical) occupy residues 19 to 39 (FWGL…TSPL), 58 to 78 (MIVL…VTAK), 110 to 130 (MFLM…SMIT), 147 to 167 (PALE…LFAV), 178 to 198 (AFGP…IVHI), 216 to 236 (FLLS…LAVT), 257 to 277 (WLFF…ALVL), 290 to 310 (MVPE…TVIA), 347 to 367 (IYLP…VLLF), 377 to 397 (YGIA…VVIW), 404 to 424 (AAVA…FFSA), and 429 to 449 (LFEG…TIWT).

Belongs to the HAK/KUP transporter (TC 2.A.72) family.

It is found in the cell inner membrane. The catalysed reaction is K(+)(in) + H(+)(in) = K(+)(out) + H(+)(out). In terms of biological role, transport of potassium into the cell. Likely operates as a K(+):H(+) symporter. The protein is Probable potassium transport system protein Kup 2 of Bradyrhizobium sp. (strain BTAi1 / ATCC BAA-1182).